Reading from the N-terminus, the 424-residue chain is MHHFFKGQFFDFETCRILGTAVYGGADVAEVLEAVGQIRDGDPVSWGRAWAIQAERALVLAEEACKSGDRTAARDAYLRGSNYTRASGYMLTGEGPNRPDPRSREIVERVQAIFRKAAALFDHPVQFLKIPFEGGLKLPCTLYLPPPDRRLPGKIPILISGGGADALQEELYYMHPSAGPDLGYAVLTFEGPGQGVMLRKHDAKMRPDWEAVAGAVIDFLEELARSQPDLDLDTSRIAFSGCSLGGYFALRAAADPRVKACVSLDPLYSFWDFAMEHVSPTFINAWEAGWLKDGAVDAVVRMMMAMSFQMRWELSIAGTFFGQTSPARIMKEMKKFSLAGGQLRRVQCPVLVSGASHSLYLEGNHHTMRIYNELVNHTKGDKQLWLTATPGQGSLQAKMGALRLANQKTFKFLDEHFGIERPQL.

The Nucleophile role is filled by S243.

The protein belongs to the AB hydrolase superfamily. FUS2 hydrolase family. Homodimer.

It functions in the pathway secondary metabolite biosynthesis. Functionally, hydrolyase; part of the gene cluster that mediates the biosynthesis of a tyrosine-derived cytochalasan acting as a fungal signal recognized by resistant rice plants and leads to avirulence in Pi33 resistant rice cultivars. The first step in the pathway is catalyzed by the hybrid PKS-NRPS ACE1, assisted by the enoyl reductase RAP1, that are responsible for fusion of the tyrosine precursor and the polyketide backbone. The polyketide synthase module (PKS) of ACE1 is responsible for the synthesis of the polyketide backbone and the downstream nonribosomal peptide synthetase (NRPS) amidates the carboxyl end of the polyketide with the tyrosine precursor. Because ACE1 lacks a designated enoylreductase (ER) domain, the required activity is provided the enoyl reductase RAP1. Reduction by the hydrolyase ORFZ, followed by dehydration and intra-molecular Diels-Alder cyclization by the Diels-Alderase ORF3 then yield the required isoindolone-fused macrocycle. A number of oxidative steps catalyzed by the tailoring enzymes identified within the cluster, including cytochrome P450 monooxygenases CYP1 to CYP4, the FAD-linked oxidoreductase OXR2 and the short-chain dehydrogenase/reductase OXR1, are further required to afford the final cytochalasans that confer avirulence and which have still to be identified. The monooxygenase CYP1 has been shown to be a site-selective C-18 hydroxylase whereas the function of CYP3 is the site-selective epoxidation of the C-6/C-7 olefin that is present in some intermediate compounds. Finally, SYN2 and RAP2 are not required for avirulence in Pi33 resistant rice cultivars. This chain is Hydrolase ORFZ, found in Pyricularia oryzae (strain 70-15 / ATCC MYA-4617 / FGSC 8958) (Rice blast fungus).